Here is a 177-residue protein sequence, read N- to C-terminus: Protein VERNALIZATION 3 (177 aa).

The protein belongs to the phosphatidylethanolamine-binding protein family. In terms of tissue distribution, expressed in leaves but not in shoot apex.

In terms of biological role, involved in the regulation of vernalization and of flowering time; this process in essential for flowering in cv. Bd29-1 but seems do not occur in cv. Bd21. The polypeptide is Protein VERNALIZATION 3 (Brachypodium distachyon (Purple false brome)).